A 68-amino-acid chain; its full sequence is Small integral membrane protein 10-like protein 3 (68 aa).

The sequence is that of Small integral membrane protein 10-like protein 3 from Homo sapiens (Human).